Here is a 386-residue protein sequence, read N- to C-terminus: SWI/SNF-related matrix-associated actin-dependent regulator of chromatin subfamily B member 1 (386 aa).

Residues Met1–Ser114 are DNA-binding.

This sequence belongs to the SNF5 family. Component of the multiprotein chromatin-remodeling complexes SWI/SNF. Component of neural progenitors-specific chromatin remodeling complex (npBAF complex) and the neuron-specific chromatin remodeling complex (nBAF complex). Component of the BAF (SWI/SNF) chromatin remodeling complex. Component of the SWI/SNF-B (PBAF) chromatin remodeling complex. Binds to double-stranded DNA.

It is found in the nucleus. Functionally, involved in chromatin-remodeling. Core component of the BAF (SWI/SNF) complex. This ATP-dependent chromatin-remodeling complex plays important roles in cell proliferation and differentiation, in cellular antiviral activities and inhibition of tumor formation. Belongs to the neural progenitors-specific chromatin remodeling complex (npBAF complex) and the neuron-specific chromatin remodeling complex (nBAF complex) and may play a role in neural development. This is SWI/SNF-related matrix-associated actin-dependent regulator of chromatin subfamily B member 1 (SMARCB1) from Gallus gallus (Chicken).